We begin with the raw amino-acid sequence, 227 residues long: Transcriptional regulatory protein TdiR (227 aa).

Positions 11–125 constitute a Response regulatory domain; sequence TVFVVDDEAS…DLLDAVNAAL (115 aa). Aspartate 60 is modified (4-aspartylphosphate). The 66-residue stretch at 141-206 folds into the HTH luxR-type domain; it reads HLDLLATLSQ…DLMHFVMRGS (66 aa). Positions 165–184 form a DNA-binding region, H-T-H motif; it reads SKEIAKLLGISYKTVEAHRG.

In terms of processing, phosphorylated by TdiS.

Member of the two-component regulatory system TdiR/TdiS, which probably regulates transcription of toluene catabolic genes (bss operon). Binds to DNA. The polypeptide is Transcriptional regulatory protein TdiR (tdiR) (Thauera aromatica).